Consider the following 133-residue polypeptide: Late embryogenesis abundant protein B19.3 (133 aa).

Residues 1–133 (MASGQQERSE…IDESKFKTKS (133 aa)) are disordered. 3 stretches are compositionally biased toward basic and acidic residues: residues 7–19 (ERSELDRMAREGE), 32–102 (EAQE…EMGR), and 113–133 (GGERAAREGIDIDESKFKTKS). 3 tandem repeats follow at residues 24–43 (GGTGGKTLEAQEHLAEGRSR), 44–63 (GGQTRKDQLGEEGYREMGHK), and 64–83 (GGETRKEQLGEEGYREMGHK). The interval 24–83 (GGTGGKTLEAQEHLAEGRSRGGQTRKDQLGEEGYREMGHKGGETRKEQLGEEGYREMGHK) is 3 X 20 AA tandem repeats.

The protein belongs to the small hydrophilic plant seed protein family.

Functionally, lea proteins are late embryonic proteins abundant in higher plant seed embryos. In Hordeum vulgare (Barley), this protein is Late embryogenesis abundant protein B19.3 (B19.3).